The chain runs to 551 residues: L-lactate permease (551 aa).

The next 13 membrane-spanning stretches (helical) occupy residues 13–33, 37–57, 69–89, 131–151, 159–179, 194–214, 220–240, 244–264, 366–386, 405–425, 438–458, 494–514, and 530–550; these read NIWLSSLIASLPILFFFFALI, LKGYVAASWTVAIALAVALLF, VVYGFFYGLWPIAWIIIAAVF, GAAGFGAPVAITAALLVGLGF, LCLIVNTAPVAFGAMGIPILV, MVGRQLPFMTIIVLFWIMAIM, IKETWPAVVVAGGSFAIAQYL, FIGPELPDIISSLVSLLCLTL, FDWFSATGTAILFAALLSIVW, LALPIYSIGMVLAFAFISNYS, TGHAFTFFSPFLGWLGVFLTG, VTGKMISPQSIAIACAAVGLV, and IFTCIVGVITTLQAYVLTWMI.

It belongs to the lactate permease family.

The protein resides in the cell inner membrane. It carries out the reaction (S)-lactate(in) + H(+)(in) = (S)-lactate(out) + H(+)(out). The enzyme catalyses (R)-lactate(in) + H(+)(in) = (R)-lactate(out) + H(+)(out). It catalyses the reaction glycolate(in) + H(+)(in) = glycolate(out) + H(+)(out). Inhibited by the proton ionophore carbonyl cyanide m-chlorophenylhydrazone (CCCP). Functionally, uptake of L-lactate across the membrane. Can also transport D-lactate and glycolate. Seems to be driven by a proton motive force. This Escherichia coli (strain K12) protein is L-lactate permease.